The following is a 607-amino-acid chain: UPF0329 protein ECU06_1610 (607 aa).

Disordered regions lie at residues Val312–Gly410 and Thr531–Val570. Positions His313–Gly347 are enriched in basic and acidic residues. A compositionally biased stretch (basic residues) spans Lys353–Gly364. Positions Lys365 to Asp374 are enriched in basic and acidic residues. Residues Arg375–Ala393 show a composition bias toward acidic residues. Positions Thr531–Ser543 are enriched in polar residues. Residues Asp549–Ser558 show a composition bias toward acidic residues.

This sequence belongs to the UPF0329 family.

The chain is UPF0329 protein ECU06_1610 from Encephalitozoon cuniculi (strain GB-M1) (Microsporidian parasite).